The sequence spans 385 residues: 8-amino-7-oxononanoate synthase (385 aa).

Arginine 21 is a substrate binding site. 108 to 109 is a pyridoxal 5'-phosphate binding site; the sequence is GF. Histidine 133 serves as a coordination point for substrate. 3 residues coordinate pyridoxal 5'-phosphate: serine 179, histidine 207, and threonine 233. Lysine 236 is subject to N6-(pyridoxal phosphate)lysine. Threonine 352 lines the substrate pocket.

It belongs to the class-II pyridoxal-phosphate-dependent aminotransferase family. BioF subfamily. In terms of assembly, homodimer. Requires pyridoxal 5'-phosphate as cofactor.

It catalyses the reaction 6-carboxyhexanoyl-[ACP] + L-alanine + H(+) = (8S)-8-amino-7-oxononanoate + holo-[ACP] + CO2. The protein operates within cofactor biosynthesis; biotin biosynthesis. In terms of biological role, catalyzes the decarboxylative condensation of pimeloyl-[acyl-carrier protein] and L-alanine to produce 8-amino-7-oxononanoate (AON), [acyl-carrier protein], and carbon dioxide. The chain is 8-amino-7-oxononanoate synthase from Salmonella paratyphi B (strain ATCC BAA-1250 / SPB7).